The chain runs to 323 residues: Cytochrome c biogenesis protein CcsA (323 aa).

A run of 8 helical transmembrane segments spans residues 17 to 37 (VVSI…IVGF), 44 to 64 (GMII…FFSG), 68 to 88 (FSDL…FYMV), 98 to 118 (LSTI…SGLL), 143 to 163 (MILG…ILVI), 229 to 249 (IISL…VWAN), 262 to 279 (ETWA…LHSR), and 291 to 311 (IVAS…NLLG).

This sequence belongs to the CcmF/CycK/Ccl1/NrfE/CcsA family. May interact with Ccs1.

It is found in the plastid. Its subcellular location is the chloroplast thylakoid membrane. Its function is as follows. Required during biogenesis of c-type cytochromes (cytochrome c6 and cytochrome f) at the step of heme attachment. The polypeptide is Cytochrome c biogenesis protein CcsA (Lotus japonicus (Lotus corniculatus var. japonicus)).